We begin with the raw amino-acid sequence, 197 residues long: 7-methyl-GTP pyrophosphatase (197 aa).

Asp-69 acts as the Proton acceptor in catalysis.

It belongs to the Maf family. YceF subfamily. A divalent metal cation serves as cofactor.

It is found in the cytoplasm. The catalysed reaction is N(7)-methyl-GTP + H2O = N(7)-methyl-GMP + diphosphate + H(+). Functionally, nucleoside triphosphate pyrophosphatase that hydrolyzes 7-methyl-GTP (m(7)GTP). May have a dual role in cell division arrest and in preventing the incorporation of modified nucleotides into cellular nucleic acids. The protein is 7-methyl-GTP pyrophosphatase of Pectobacterium atrosepticum (strain SCRI 1043 / ATCC BAA-672) (Erwinia carotovora subsp. atroseptica).